A 1164-amino-acid polypeptide reads, in one-letter code: Nuclear exosome regulator NRDE2 (1164 aa).

Disordered stretches follow at residues 1–25 and 39–149; these read MALF…ELDW and LSQQ…GHRF. Ala-2 carries the post-translational modification N-acetylalanine. Basic and acidic residues predominate over residues 61 to 73; that stretch reads LKSESSDESDTNK. The stretch at 61-383 forms a coiled coil; that stretch reads LKSESSDESD…IESNQSSVDL (323 aa). A compositionally biased stretch (basic residues) spans 74 to 103; sequence KLKQTSRKKKKEKKKKRKHQHHKKTKRKHG. The span at 110–133 shows a compositional bias: basic and acidic residues; the sequence is SETDTDSEKDKPSRGVGGSKKESE. Residues 163 to 266 are MID/MTR4-interacting domain; sequence FRTDKKPDPA…KDLEDAAPVT (104 aa). The disordered stretch occupies residues 279–305; that stretch reads TTHWLQGQGPPEQESKQPDAQPDSESA. HAT repeat units lie at residues 305 to 337, 395 to 427, 758 to 792, 978 to 1010, and 1067 to 1101; these read AALK…FQDE, WEPS…FCQS, SQGK…LEWL, YPLA…IQNK, and GLMH…FLVS.

The protein belongs to the NRDE2 family. As to quaternary structure, interacts with MTREX; the interaction is direct and stabilizes NRDE2. Interacts with EXOSC10, EFTUD2 and EIF4A3.

It is found in the nucleus speckle. The protein localises to the nucleus. Its subcellular location is the nucleolus. The protein resides in the nucleoplasm. In terms of biological role, protein of the nuclear speckles that regulates RNA degradation and export from the nucleus through its interaction with MTREX an essential factor directing various RNAs to exosomal degradation. Changes the conformation of MTREX, precluding its association with the nuclear exosome and interaction with proteins required for its function in RNA exosomal degradation. Negatively regulates, for instance, the degradation of mRNAs and lncRNAs by inhibiting their MTREX-mediated recruitment to nuclear exosome. By preventing the degradation of RNAs in the nucleus, it promotes their export to the cytoplasm. U5 snRNP-associated RNA splicing factor which is required for efficient splicing of CEP131 pre-mRNA and plays an important role in centrosome maturation, integrity and function during mitosis. Suppresses intron retention in a subset of pre-mRNAs containing short, GC-rich introns with relatively weak 5' and 3' splice sites. Plays a role in DNA damage response. This chain is Nuclear exosome regulator NRDE2, found in Homo sapiens (Human).